Reading from the N-terminus, the 170-residue chain is Putative zinc finger protein 542 (170 aa).

Positions Met-1–Pro-42 constitute a KRAB domain. 2 C2H2-type zinc fingers span residues Asn-98–His-120 and Asn-126–His-148. A C2H2-type 3; degenerate zinc finger spans residues Tyr-154 to Thr-170.

Belongs to the krueppel C2H2-type zinc-finger protein family.

The protein resides in the nucleus. May be involved in transcriptional regulation. The sequence is that of Putative zinc finger protein 542 (ZNF542P) from Homo sapiens (Human).